A 38-amino-acid chain; its full sequence is Alpha-amylase (38 aa).

Belongs to the glycosyl hydrolase 13 family. As to quaternary structure, monomer. The cofactor is Ca(2+). It depends on chloride as a cofactor. As to expression, expressed by the venom gland.

It localises to the secreted. It carries out the reaction Endohydrolysis of (1-&gt;4)-alpha-D-glucosidic linkages in polysaccharides containing three or more (1-&gt;4)-alpha-linked D-glucose units.. This Tityus serrulatus (Brazilian scorpion) protein is Alpha-amylase.